A 460-amino-acid polypeptide reads, in one-letter code: Probable lipid II flippase MurJ (460 aa).

Helical transmembrane passes span 4-24 (ILGA…PNLF), 50-70 (FASL…LLVA), 95-115 (IVAI…LGAL), 122-142 (FFAS…ALLI), 155-175 (LSYG…YPLV), 228-248 (IASF…VSYL), 257-277 (LPLA…IAIA), 292-312 (KAWF…IMLS), 336-356 (VFSL…FSLW), 366-386 (AAKI…SLMP), and 428-448 (LVIL…KSWV).

This sequence belongs to the MurJ/MviN family.

The protein resides in the cell inner membrane. It participates in cell wall biogenesis; peptidoglycan biosynthesis. Functionally, involved in peptidoglycan biosynthesis. Transports lipid-linked peptidoglycan precursors from the inner to the outer leaflet of the cytoplasmic membrane. This is Probable lipid II flippase MurJ from Helicobacter pylori (strain J99 / ATCC 700824) (Campylobacter pylori J99).